The primary structure comprises 767 residues: Tetratricopeptide repeat protein 16 (767 aa).

TPR repeat units lie at residues 18 to 51 (VREY…DPKL), 53 to 85 (DFYV…DPGN), 93 to 126 (AFVL…QPQN), 128 to 155 (SFSY…REVK), 208 to 241 (AKQS…NPLD), 242 to 275 (PNFF…VTDT), 288 to 321 (LLTY…EQNE), 322 to 355 (KGLY…SPLD), and 363 to 396 (GVLQ…SPQK). The disordered stretch occupies residues 612-733 (EVTPAYGQRD…DSLSFSEISS (122 aa)). Residues 684 to 718 (QRSSQKVTKTPSLTHSTTHSDIGESANDTPGQTPW) show a composition bias toward polar residues.

In Mus musculus (Mouse), this protein is Tetratricopeptide repeat protein 16 (Ttc16).